A 123-amino-acid chain; its full sequence is Nitrogenase-stabilizing/protective protein NifW (123 aa).

The protein belongs to the NifW family. As to quaternary structure, homotrimer; associates with NifD.

May protect the nitrogenase Fe-Mo protein from oxidative damage. This chain is Nitrogenase-stabilizing/protective protein NifW, found in Rhodopseudomonas palustris (strain HaA2).